The chain runs to 312 residues: D-alanine--D-alanine ligase (312 aa).

The region spanning 108–308 (KLVWQQTGIP…YSELVVKVLS (201 aa)) is the ATP-grasp domain. 138–193 (AAKLGVPLFVKPASEGSSVAVEKVKSADALPAALEEAAKHDKIVIVEKSIEGGGEY) lines the ATP pocket. Mg(2+) contacts are provided by Asp-262, Glu-275, and Asn-277.

This sequence belongs to the D-alanine--D-alanine ligase family. It depends on Mg(2+) as a cofactor. Mn(2+) is required as a cofactor.

The protein resides in the cytoplasm. It carries out the reaction 2 D-alanine + ATP = D-alanyl-D-alanine + ADP + phosphate + H(+). It participates in cell wall biogenesis; peptidoglycan biosynthesis. Cell wall formation. The polypeptide is D-alanine--D-alanine ligase (Burkholderia pseudomallei (strain 668)).